The sequence spans 586 residues: Guanylate-binding protein 5 (586 aa).

Residues methionine 1–aspartate 306 form an NLRP3-binding region. The segment at methionine 1–cysteine 309 is GTPase domain (Globular). One can recognise a GB1/RHD3-type G domain in the interval threonine 35 to methionine 276. Residues glycine 45–serine 52, valine 67–serine 69, arginine 181–aspartate 182, and leucine 245 contribute to the GTP site. A required for tetramerization, but not for dimerization region spans residues methionine 529–leucine 586. A Cysteine methyl ester modification is found at cysteine 583. Cysteine 583 carries the S-geranylgeranyl cysteine lipid modification. A propeptide spans valine 584–leucine 586 (removed in mature form).

Belongs to the TRAFAC class dynamin-like GTPase superfamily. GB1/RHD3 GTPase family. GB1 subfamily. In terms of assembly, homodimer; homodimerizes upon GTP-binding, forming a close face-to-face dimer. Heterodimer with other family members, including GBP1, GBP2, GBP3 and GBP4. May also form tetramers (dimer of dimers) in the presence of GTP. Interacts with NLRP3, possibly in its tetrameric form, and promotes PYCARD/ASC polymerization. Homodimer; homodimerizes upon GTP-binding. GDP-bound form remains homodimeric. As to quaternary structure, homodimer; homodimerizes upon GTP-binding. GDP-bound is monomeric. Isoprenylation is required for proper subcellular location. Expressed in peripheral blood monocytes (at protein level).

The protein resides in the cytoplasmic vesicle membrane. It localises to the golgi apparatus membrane. It is found in the cytoplasm. The enzyme catalyses GTP + H2O = GDP + phosphate + H(+). Its function is as follows. Interferon (IFN)-inducible GTPase that plays important roles in innate immunity against a diverse range of bacterial, viral and protozoan pathogens. Hydrolyzes GTP, but in contrast to other family members, does not produce GMP. Following infection, recruited to the pathogen-containing vacuoles or vacuole-escaped bacteria and acts as a positive regulator of inflammasome assembly by promoting the release of inflammasome ligands from bacteria. Acts by promoting lysis of pathogen-containing vacuoles, releasing pathogens into the cytosol. Following pathogen release in the cytosol, promotes recruitment of proteins that mediate bacterial cytolysis: this liberates ligands that are detected by inflammasomes, such as lipopolysaccharide (LPS) that activates the non-canonical CASP4/CASP11 inflammasome or double-stranded DNA (dsDNA) that activates the AIM2 inflammasome. As an activator of NLRP3 inflammasome assembly: promotes selective NLRP3 inflammasome assembly in response to microbial and soluble, but not crystalline, agents. Independently of its GTPase activity, acts as an inhibitor of various viruses infectivity, such as HIV-1, Zika and influenza A viruses, by inhibiting FURIN-mediated maturation of viral envelope proteins. In terms of biological role, antigenic tumor-specific truncated splice form. The chain is Guanylate-binding protein 5 from Homo sapiens (Human).